We begin with the raw amino-acid sequence, 260 residues long: tRNA pseudouridine synthase A (260 aa).

The Nucleophile role is filled by Asp-51. Residue Tyr-109 coordinates substrate.

This sequence belongs to the tRNA pseudouridine synthase TruA family. As to quaternary structure, homodimer.

The enzyme catalyses uridine(38/39/40) in tRNA = pseudouridine(38/39/40) in tRNA. Its function is as follows. Formation of pseudouridine at positions 38, 39 and 40 in the anticodon stem and loop of transfer RNAs. This Albidiferax ferrireducens (strain ATCC BAA-621 / DSM 15236 / T118) (Rhodoferax ferrireducens) protein is tRNA pseudouridine synthase A.